The chain runs to 354 residues: UDP-N-acetylglucosamine--N-acetylmuramyl-(pentapeptide) pyrophosphoryl-undecaprenol N-acetylglucosamine transferase (354 aa).

Residues 15 to 17 (TGG), Asn-127, Arg-163, Ser-191, Ile-244, 263 to 268 (ALTVSE), and Gln-288 each bind UDP-N-acetyl-alpha-D-glucosamine.

Belongs to the glycosyltransferase 28 family. MurG subfamily.

The protein localises to the cell inner membrane. The enzyme catalyses di-trans,octa-cis-undecaprenyl diphospho-N-acetyl-alpha-D-muramoyl-L-alanyl-D-glutamyl-meso-2,6-diaminopimeloyl-D-alanyl-D-alanine + UDP-N-acetyl-alpha-D-glucosamine = di-trans,octa-cis-undecaprenyl diphospho-[N-acetyl-alpha-D-glucosaminyl-(1-&gt;4)]-N-acetyl-alpha-D-muramoyl-L-alanyl-D-glutamyl-meso-2,6-diaminopimeloyl-D-alanyl-D-alanine + UDP + H(+). The protein operates within cell wall biogenesis; peptidoglycan biosynthesis. Functionally, cell wall formation. Catalyzes the transfer of a GlcNAc subunit on undecaprenyl-pyrophosphoryl-MurNAc-pentapeptide (lipid intermediate I) to form undecaprenyl-pyrophosphoryl-MurNAc-(pentapeptide)GlcNAc (lipid intermediate II). This chain is UDP-N-acetylglucosamine--N-acetylmuramyl-(pentapeptide) pyrophosphoryl-undecaprenol N-acetylglucosamine transferase, found in Aliivibrio salmonicida (strain LFI1238) (Vibrio salmonicida (strain LFI1238)).